The primary structure comprises 150 residues: Leukotriene C4 synthase (150 aa).

Over Met1 to Ala6 the chain is Cytoplasmic. The chain crosses the membrane as a helical span at residues Leu7–Ile27. Over Arg28–Arg48 the chain is Lumenal. Arg30 is a binding site for glutathione. Arg31 functions as the Proton donor in the catalytic mechanism. The residue at position 36 (Ser36) is a Phosphoserine. Residues Val49 to Val69 traverse the membrane as a helical segment. Glutathione-binding positions include Arg51–Asn55 and Glu58–Tyr59. Residues Ala70 to Tyr73 are Cytoplasmic-facing. Residues Phe74–Phe94 traverse the membrane as a helical segment. Position 93–97 (Tyr93–Tyr97) interacts with glutathione. Topologically, residues Trp95–Arg104 are lumenal. The active-site Proton acceptor is Arg104. The chain crosses the membrane as a helical span at residues Leu105–Leu124. Residues Gly125–Ala150 are Cytoplasmic-facing.

The protein belongs to the MAPEG family. In terms of assembly, homotrimer. Interacts with ALOX5AP and ALOX5. In terms of processing, phosphorylation at Ser-36 by RPS6KB1 inhibits the leukotriene-C4 synthase activity.

The protein resides in the nucleus outer membrane. The protein localises to the endoplasmic reticulum membrane. It is found in the nucleus membrane. It carries out the reaction leukotriene C4 = leukotriene A4 + glutathione. The enzyme catalyses (13S,14S)-epoxy-(4Z,7Z,9E,11E,16Z,19Z)-docosahexaenoate + glutathione = (13R)-S-glutathionyl-(14S)-hydroxy-(4Z,7Z,9E,11E,16Z,19Z)-docosahexaenoate. It functions in the pathway lipid metabolism; leukotriene C4 biosynthesis. Inhibited by MK886. Functionally, catalyzes the conjugation of leukotriene A4 with reduced glutathione (GSH) to form leukotriene C4 with high specificity. Can also catalyze the transfer of a glutathionyl group from glutathione (GSH) to 13(S),14(S)-epoxy-docosahexaenoic acid to form maresin conjugate in tissue regeneration 1 (MCTR1), a bioactive lipid mediator that possess potent anti-inflammatory and proresolving actions. This Cavia porcellus (Guinea pig) protein is Leukotriene C4 synthase (LTC4S).